The following is a 222-amino-acid chain: Eukaryotic translation initiation factor 3 subunit K (222 aa).

The PCI domain occupies 46-208; the sequence is YDLEANLAVL…KIKTKNITEK (163 aa).

The protein belongs to the eIF-3 subunit K family. As to quaternary structure, component of the eukaryotic translation initiation factor 3 (eIF-3) complex. The eIF-3 complex interacts with pix.

The protein resides in the cytoplasm. Component of the eukaryotic translation initiation factor 3 (eIF-3) complex, which is involved in protein synthesis of a specialized repertoire of mRNAs and, together with other initiation factors, stimulates binding of mRNA and methionyl-tRNAi to the 40S ribosome. The eIF-3 complex specifically targets and initiates translation of a subset of mRNAs involved in cell proliferation. This chain is Eukaryotic translation initiation factor 3 subunit K, found in Drosophila persimilis (Fruit fly).